The chain runs to 252 residues: Trans-aconitate 2-methyltransferase (252 aa).

This sequence belongs to the methyltransferase superfamily. Tam family. Monomer.

It localises to the cytoplasm. It catalyses the reaction trans-aconitate + S-adenosyl-L-methionine = (E)-3-(methoxycarbonyl)pent-2-enedioate + S-adenosyl-L-homocysteine. Functionally, catalyzes the S-adenosylmethionine monomethyl esterification of trans-aconitate at high affinity and of cis-aconitate, isocitrate, and citrate at lower velocities and affinities. The sequence is that of Trans-aconitate 2-methyltransferase (tam) from Escherichia coli O157:H7.